A 138-amino-acid polypeptide reads, in one-letter code: Aspartate 1-decarboxylase (138 aa).

Ser-25 acts as the Schiff-base intermediate with substrate; via pyruvic acid in catalysis. Ser-25 is subject to Pyruvic acid (Ser). Thr-57 lines the substrate pocket. The Proton donor role is filled by Tyr-58. A substrate-binding site is contributed by 73 to 75 (GAA). Residues 117–138 (VDADPTAPPAPGLERSPLAEPV) are disordered.

It belongs to the PanD family. Heterooctamer of four alpha and four beta subunits. Pyruvate serves as cofactor. Is synthesized initially as an inactive proenzyme, which is activated by self-cleavage at a specific serine bond to produce a beta-subunit with a hydroxyl group at its C-terminus and an alpha-subunit with a pyruvoyl group at its N-terminus.

It localises to the cytoplasm. The enzyme catalyses L-aspartate + H(+) = beta-alanine + CO2. It functions in the pathway cofactor biosynthesis; (R)-pantothenate biosynthesis; beta-alanine from L-aspartate: step 1/1. Functionally, catalyzes the pyruvoyl-dependent decarboxylation of aspartate to produce beta-alanine. In Clavibacter michiganensis subsp. michiganensis (strain NCPPB 382), this protein is Aspartate 1-decarboxylase.